A 1567-amino-acid polypeptide reads, in one-letter code: Transmembrane protein 131 homolog (1567 aa).

The N-terminal stretch at 1–32 is a signal peptide; the sequence is MPTQVQMRPLLRIFAEPILLILIFLFTLGAKG. At 33 to 1049 the chain is on the lumenal side; it reads EKVLQETFLG…RPGWESSLKN (1017 aa). A papD-L domain region spans residues 55 to 228; that stretch reads RLVPSRLDFG…TLKPVIRISF (174 aa). Residues Asn84, Asn114, Asn168, Asn235, Asn316, Asn317, Asn342, Asn372, Asn409, Asn462, Asn563, Asn890, and Asn1013 are each glycosylated (N-linked (GlcNAc...) asparagine). Residues 1050–1070 traverse the membrane as a helical segment; that stretch reads AALVVLLASFGLVLVAAVFDA. Over 1071-1567 the chain is Cytoplasmic; the sequence is KAIMVQQNAY…SQRNNHNHMN (497 aa). A coiled-coil region spans residues 1096-1130; the sequence is RNIVKLQAEEAAAKAESVQQQQKVKNGQLKELRKR. Disordered stretches follow at residues 1112 to 1337, 1364 to 1386, and 1502 to 1567; these read SVQQ…SPDA, PTDN…IGDN, and PGLE…NHMN. Low complexity-rich tracts occupy residues 1132 to 1150 and 1166 to 1183; these read VVNS…SPWS and KTVV…APAA. 2 positions are modified to phosphoserine: Ser1201 and Ser1258. The segment covering 1247 to 1259 has biased composition (polar residues); sequence AKSSPPQQENISP. Over residues 1284–1298 the composition is skewed to basic and acidic residues; the sequence is PGRERERERRSKDQK. Polar residues predominate over residues 1319 to 1331; sequence KLNFGQTTNSTSP. Composition is skewed to polar residues over residues 1507–1519 and 1536–1561; these read SARQ…QEQV and LPTQ…SQRN.

It belongs to the TMEM131 family. In terms of assembly, may interact (via PapD-L domain) with collagen proteins (via C-terminus); the interaction is direct and is involved in assembly and TRAPPIII ER-to-Golgi transport complex-dependent secretion of collagen.

Its subcellular location is the membrane. Its function is as follows. Collagen binding transmembrane protein involved in collagen secretion, probably by recruiting the ER-to-Golgi transport complex TRAPPIII. The chain is Transmembrane protein 131 homolog from Drosophila melanogaster (Fruit fly).